A 254-amino-acid polypeptide reads, in one-letter code: Phosphoribosylaminoimidazole-succinocarboxamide synthase (254 aa).

Belongs to the SAICAR synthetase family.

It carries out the reaction 5-amino-1-(5-phospho-D-ribosyl)imidazole-4-carboxylate + L-aspartate + ATP = (2S)-2-[5-amino-1-(5-phospho-beta-D-ribosyl)imidazole-4-carboxamido]succinate + ADP + phosphate + 2 H(+). The protein operates within purine metabolism; IMP biosynthesis via de novo pathway; 5-amino-1-(5-phospho-D-ribosyl)imidazole-4-carboxamide from 5-amino-1-(5-phospho-D-ribosyl)imidazole-4-carboxylate: step 1/2. The polypeptide is Phosphoribosylaminoimidazole-succinocarboxamide synthase (Rhodospirillum centenum (strain ATCC 51521 / SW)).